The chain runs to 559 residues: Dihydroxy-acid dehydratase (559 aa).

Cysteine 52 serves as a coordination point for [2Fe-2S] cluster. Aspartate 84 is a Mg(2+) binding site. [2Fe-2S] cluster is bound at residue cysteine 125. Mg(2+)-binding residues include aspartate 126 and lysine 127. Lysine 127 carries the N6-carboxylysine modification. Cysteine 197 contributes to the [2Fe-2S] cluster binding site. Glutamate 447 is a binding site for Mg(2+). Serine 473 functions as the Proton acceptor in the catalytic mechanism.

It belongs to the IlvD/Edd family. As to quaternary structure, homodimer. Requires [2Fe-2S] cluster as cofactor. Mg(2+) is required as a cofactor.

The catalysed reaction is (2R)-2,3-dihydroxy-3-methylbutanoate = 3-methyl-2-oxobutanoate + H2O. It catalyses the reaction (2R,3R)-2,3-dihydroxy-3-methylpentanoate = (S)-3-methyl-2-oxopentanoate + H2O. The protein operates within amino-acid biosynthesis; L-isoleucine biosynthesis; L-isoleucine from 2-oxobutanoate: step 3/4. Its pathway is amino-acid biosynthesis; L-valine biosynthesis; L-valine from pyruvate: step 3/4. Functionally, functions in the biosynthesis of branched-chain amino acids. Catalyzes the dehydration of (2R,3R)-2,3-dihydroxy-3-methylpentanoate (2,3-dihydroxy-3-methylvalerate) into 2-oxo-3-methylpentanoate (2-oxo-3-methylvalerate) and of (2R)-2,3-dihydroxy-3-methylbutanoate (2,3-dihydroxyisovalerate) into 2-oxo-3-methylbutanoate (2-oxoisovalerate), the penultimate precursor to L-isoleucine and L-valine, respectively. The chain is Dihydroxy-acid dehydratase from Roseiflexus sp. (strain RS-1).